We begin with the raw amino-acid sequence, 406 residues long: Succinylornithine transaminase (406 aa).

N6-(pyridoxal phosphate)lysine is present on K252.

The protein belongs to the class-III pyridoxal-phosphate-dependent aminotransferase family. AstC subfamily. Pyridoxal 5'-phosphate is required as a cofactor.

It catalyses the reaction N(2)-succinyl-L-ornithine + 2-oxoglutarate = N-succinyl-L-glutamate 5-semialdehyde + L-glutamate. It functions in the pathway amino-acid degradation; L-arginine degradation via AST pathway; L-glutamate and succinate from L-arginine: step 3/5. Its function is as follows. Catalyzes the transamination of N(2)-succinylornithine and alpha-ketoglutarate into N(2)-succinylglutamate semialdehyde and glutamate. Can also act as an acetylornithine aminotransferase. In Escherichia coli (strain SMS-3-5 / SECEC), this protein is Succinylornithine transaminase.